Consider the following 63-residue polypeptide: Cytochrome b-c1 complex subunit 9 (63 aa).

The Mitochondrial matrix segment spans residues 2-21; sequence AAATLTSKLYSLLFRRTSTF. The chain crosses the membrane as a helical span at residues 22–47; that stretch reads ALTIIVGVMFFERAFDQGADAIYDHI. The Mitochondrial intermembrane portion of the chain corresponds to 48–63; that stretch reads NEGKLWKHIKHKYENK.

This sequence belongs to the UQCR10/QCR9 family. As to quaternary structure, component of the ubiquinol-cytochrome c oxidoreductase (cytochrome b-c1 complex, complex III, CIII), a multisubunit enzyme composed of 11 subunits. The complex is composed of 3 respiratory subunits cytochrome b, cytochrome c1 and Rieske protein UQCRFS1, 2 core protein subunits UQCRC1/QCR1 and UQCRC2/QCR2, and 6 low-molecular weight protein subunits UQCRH/QCR6, UQCRB/QCR7, UQCRQ/QCR8, UQCR10/QCR9, UQCR11/QCR10 and subunit 9, the cleavage product of Rieske protein UQCRFS1. The complex exists as an obligatory dimer and forms supercomplexes (SCs) in the inner mitochondrial membrane with NADH-ubiquinone oxidoreductase (complex I, CI) and cytochrome c oxidase (complex IV, CIV), resulting in different assemblies (supercomplex SCI(1)III(2)IV(1) and megacomplex MCI(2)III(2)IV(2)). Interacts with STMP1.

It localises to the mitochondrion inner membrane. In terms of biological role, component of the ubiquinol-cytochrome c oxidoreductase, a multisubunit transmembrane complex that is part of the mitochondrial electron transport chain which drives oxidative phosphorylation. The respiratory chain contains 3 multisubunit complexes succinate dehydrogenase (complex II, CII), ubiquinol-cytochrome c oxidoreductase (cytochrome b-c1 complex, complex III, CIII) and cytochrome c oxidase (complex IV, CIV), that cooperate to transfer electrons derived from NADH and succinate to molecular oxygen, creating an electrochemical gradient over the inner membrane that drives transmembrane transport and the ATP synthase. The cytochrome b-c1 complex catalyzes electron transfer from ubiquinol to cytochrome c, linking this redox reaction to translocation of protons across the mitochondrial inner membrane, with protons being carried across the membrane as hydrogens on the quinol. In the process called Q cycle, 2 protons are consumed from the matrix, 4 protons are released into the intermembrane space and 2 electrons are passed to cytochrome c. The polypeptide is Cytochrome b-c1 complex subunit 9 (UQCR10) (Homo sapiens (Human)).